Reading from the N-terminus, the 397-residue chain is tRNA-specific 2-thiouridylase MnmA (397 aa).

ATP contacts are provided by residues 19–26 (AMSGGVDS) and Leu45. The active-site Nucleophile is Cys113. A disulfide bridge connects residues Cys113 and Cys210. Gly137 is an ATP binding site. The interval 160-162 (RDQ) is interaction with tRNA. Cys210 serves as the catalytic Cysteine persulfide intermediate.

This sequence belongs to the MnmA/TRMU family.

Its subcellular location is the cytoplasm. The enzyme catalyses S-sulfanyl-L-cysteinyl-[protein] + uridine(34) in tRNA + AH2 + ATP = 2-thiouridine(34) in tRNA + L-cysteinyl-[protein] + A + AMP + diphosphate + H(+). In terms of biological role, catalyzes the 2-thiolation of uridine at the wobble position (U34) of tRNA, leading to the formation of s(2)U34. The protein is tRNA-specific 2-thiouridylase MnmA of Bradyrhizobium sp. (strain BTAi1 / ATCC BAA-1182).